Reading from the N-terminus, the 123-residue chain is MADLAKIVEDLSNLTVLEAAELSKLLEEKWGVSAAAPVAVAAVAGAAAPVAEEKTEFDVILVEGGAQKINVIKEVRALTGLGLKEAKDLVEGAPKPIKEGASKDEAEKIKSQLEAAGAKVELK.

The protein belongs to the bacterial ribosomal protein bL12 family. In terms of assembly, homodimer. Part of the ribosomal stalk of the 50S ribosomal subunit. Forms a multimeric L10(L12)X complex, where L10 forms an elongated spine to which 2 to 4 L12 dimers bind in a sequential fashion. Binds GTP-bound translation factors.

In terms of biological role, forms part of the ribosomal stalk which helps the ribosome interact with GTP-bound translation factors. Is thus essential for accurate translation. This chain is Large ribosomal subunit protein bL12, found in Bartonella henselae (strain ATCC 49882 / DSM 28221 / CCUG 30454 / Houston 1) (Rochalimaea henselae).